The primary structure comprises 224 residues: Glutamate/aspartate import permease protein GltK (224 aa).

Topologically, residues 1–19 are periplasmic; that stretch reads MYEFDWSSIVPSLPYLLDG. The chain crosses the membrane as a helical span at residues 20-40; the sequence is LVITLKITVTAVVIGILWGTM. Positions 20–216 constitute an ABC transmembrane type-1 domain; it reads LVITLKITVT…VISLSASLLV (197 aa). At 41–67 the chain is on the cytoplasmic side; sequence LAVMRLSSFAPVAWFAKAYVNVFRSIP. Residues 68 to 88 form a helical membrane-spanning segment; it reads LVMVLLWFYLIVPGFLQNVLG. The Periplasmic segment spans residues 89 to 94; it reads LSPKND. Residues 95 to 112 traverse the membrane as a helical segment; sequence IRLISAMVAFSMFEAAYY. Over 113–154 the chain is Cytoplasmic; sequence SEIIRAGIQSISRGQSSAALALGMTHWQSMKLIILPQAFRAM. Residues 155–175 form a helical membrane-spanning segment; the sequence is VPLLLTQGIVLFQDTSLVYVL. Topologically, residues 176–196 are periplasmic; that stretch reads SLADFFRTASTIGERDGTQVE. The chain crosses the membrane as a helical span at residues 197 to 217; that stretch reads MILFAGFVYFVISLSASLLVS. Residues 218 to 224 lie on the Cytoplasmic side of the membrane; sequence YLKRRTA.

The protein belongs to the binding-protein-dependent transport system permease family. HisMQ subfamily. As to quaternary structure, the complex is composed of two ATP-binding proteins (GltL), two transmembrane proteins (GltJ and GltK) and a solute-binding protein (GltI).

The protein localises to the cell inner membrane. Its function is as follows. Part of the ABC transporter complex GltIJKL involved in glutamate and aspartate uptake. Probably responsible for the translocation of the substrate across the membrane. The sequence is that of Glutamate/aspartate import permease protein GltK (gltK) from Escherichia coli O157:H7.